The sequence spans 213 residues: Orotate phosphoribosyltransferase (213 aa).

K26 is a 5-phospho-alpha-D-ribose 1-diphosphate binding site. 34–35 (FF) contributes to the orotate binding site. 5-phospho-alpha-D-ribose 1-diphosphate contacts are provided by residues 72-73 (YK), R99, K100, K103, H105, and 124-132 (DDVITAGTA). 2 residues coordinate orotate: T128 and R156.

It belongs to the purine/pyrimidine phosphoribosyltransferase family. PyrE subfamily. As to quaternary structure, homodimer. Mg(2+) is required as a cofactor.

The catalysed reaction is orotidine 5'-phosphate + diphosphate = orotate + 5-phospho-alpha-D-ribose 1-diphosphate. It functions in the pathway pyrimidine metabolism; UMP biosynthesis via de novo pathway; UMP from orotate: step 1/2. Catalyzes the transfer of a ribosyl phosphate group from 5-phosphoribose 1-diphosphate to orotate, leading to the formation of orotidine monophosphate (OMP). In Pseudomonas paraeruginosa (strain DSM 24068 / PA7) (Pseudomonas aeruginosa (strain PA7)), this protein is Orotate phosphoribosyltransferase.